A 513-amino-acid polypeptide reads, in one-letter code: Noroxomaritidine synthase (513 aa).

A helical membrane pass occupies residues 14–34 (HYPEILIAIACFLIFSLLLSA). Cys-458 serves as a coordination point for heme.

This sequence belongs to the cytochrome P450 family. Heme is required as a cofactor.

It is found in the membrane. It carries out the reaction 4'-O-methylnorbelladine + reduced [NADPH--hemoprotein reductase] + O2 = (10bS,4aR)-noroxomaritidine + oxidized [NADPH--hemoprotein reductase] + 2 H2O + H(+). The catalysed reaction is 4'-O-methylnorbelladine + reduced [NADPH--hemoprotein reductase] + O2 = (10bR,4aS)-noroxomaritidine + oxidized [NADPH--hemoprotein reductase] + 2 H2O + H(+). It functions in the pathway alkaloid biosynthesis. Cytochrome P450 that catalyzes an intramolecular para-para' C-C phenol coupling of 4'-O-methylnorbelladine in alkaloids biosynthesis, including haemanthamine- and crinamine-type alkaloids, promising anticancer agents. Catalyzes the formation of (10bR,4aS)-noroxomaritidine and (10bS,4aR)-noroxomaritidine from 4'-O-methylnorbelladine. Also produces N-demethylnarwedine as a minor product. Involved in the biosynthesis of haemanthamine. Can also use 4'-O-methyl-N-methylnorbelladine, (S)- and (R)-coclaurine as substrates, but not 3'-O-methylnorbelladine, 3',4'-O-dimethylnorbelladine, norbelladine, haemanthamine, (10bS,4aR)- or (10bR,4aS)-noroxomaritidine, isovanillin or tyramine. The chain is Noroxomaritidine synthase from Narcissus aff. pseudonarcissus MK-2014 (Daffodil).